The sequence spans 328 residues: Phenylalanine--tRNA ligase alpha subunit (328 aa).

Glu253 is a binding site for Mg(2+).

This sequence belongs to the class-II aminoacyl-tRNA synthetase family. Phe-tRNA synthetase alpha subunit type 1 subfamily. Tetramer of two alpha and two beta subunits. Mg(2+) serves as cofactor.

It localises to the cytoplasm. It catalyses the reaction tRNA(Phe) + L-phenylalanine + ATP = L-phenylalanyl-tRNA(Phe) + AMP + diphosphate + H(+). The chain is Phenylalanine--tRNA ligase alpha subunit from Actinobacillus pleuropneumoniae serotype 5b (strain L20).